Consider the following 313-residue polypeptide: Probable lysophospholipase L2 (313 aa).

The protein resides in the cell inner membrane. The catalysed reaction is a 1-acyl-sn-glycero-3-phosphocholine + H2O = sn-glycerol 3-phosphocholine + a fatty acid + H(+). The polypeptide is Probable lysophospholipase L2 (pldB) (Haemophilus influenzae (strain ATCC 51907 / DSM 11121 / KW20 / Rd)).